Consider the following 227-residue polypeptide: ATP synthase F(0) complex subunit a (227 aa).

The next 6 membrane-spanning stretches (helical) occupy residues 14–34 (FLGI…FPTP), 69–89 (WAIL…LGLL), 99–119 (LSLN…IGMF), 139–159 (VPVL…ALGV), 165–185 (LTAG…LLTM), and 190–210 (ALLT…VAMI).

The protein belongs to the ATPase A chain family. In terms of assembly, component of the ATP synthase complex composed at least of ATP5F1A/subunit alpha, ATP5F1B/subunit beta, ATP5MC1/subunit c (homooctomer), MT-ATP6/subunit a, MT-ATP8/subunit 8, ATP5ME/subunit e, ATP5MF/subunit f, ATP5MG/subunit g, ATP5MK/subunit k, ATP5MJ/subunit j, ATP5F1C/subunit gamma, ATP5F1D/subunit delta, ATP5F1E/subunit epsilon, ATP5PF/subunit F6, ATP5PB/subunit b, ATP5PD/subunit d, ATP5PO/subunit OSCP. ATP synthase complex consists of a soluble F(1) head domain (subunits alpha(3) and beta(3)) - the catalytic core - and a membrane F(0) domain - the membrane proton channel (subunits c, a, 8, e, f, g, k and j). These two domains are linked by a central stalk (subunits gamma, delta, and epsilon) rotating inside the F1 region and a stationary peripheral stalk (subunits F6, b, d, and OSCP). Interacts with DNAJC30; interaction is direct.

The protein localises to the mitochondrion inner membrane. It carries out the reaction H(+)(in) = H(+)(out). Its function is as follows. Subunit a, of the mitochondrial membrane ATP synthase complex (F(1)F(0) ATP synthase or Complex V) that produces ATP from ADP in the presence of a proton gradient across the membrane which is generated by electron transport complexes of the respiratory chain. ATP synthase complex consist of a soluble F(1) head domain - the catalytic core - and a membrane F(1) domain - the membrane proton channel. These two domains are linked by a central stalk rotating inside the F(1) region and a stationary peripheral stalk. During catalysis, ATP synthesis in the catalytic domain of F(1) is coupled via a rotary mechanism of the central stalk subunits to proton translocation. With the subunit c (ATP5MC1), forms the proton-conducting channel in the F(0) domain, that contains two crucial half-channels (inlet and outlet) that facilitate proton movement from the mitochondrial intermembrane space (IMS) into the matrix. Protons are taken up via the inlet half-channel and released through the outlet half-channel, following a Grotthuss mechanism. In Scyliorhinus canicula (Small-spotted catshark), this protein is ATP synthase F(0) complex subunit a.